A 101-amino-acid polypeptide reads, in one-letter code: Toxin Tpa8 (101 aa).

The first 20 residues, Met1 to Val20, serve as a signal peptide directing secretion. The LCN-type CS-alpha/beta domain occupies Lys24 to Glu98. 4 disulfides stabilise this stretch: Cys44–Cys70, Cys56–Cys75, Cys60–Cys77, and Cys71–Cys97.

This sequence belongs to the long (4 C-C) scorpion toxin superfamily. Sodium channel inhibitor family. Beta subfamily. Expressed by the venom gland.

The protein resides in the secreted. In terms of biological role, excitatory insect beta-toxins induce a spastic paralysis. They bind voltage-independently at site-4 of sodium channels (Nav) and shift the voltage of activation toward more negative potentials thereby affecting sodium channel activation and promoting spontaneous and repetitive firing. In Tityus pachyurus (Colombian scorpion), this protein is Toxin Tpa8.